A 263-amino-acid polypeptide reads, in one-letter code: uncharacterized protein (263 aa).

Residues 72-168 are a coiled coil; the sequence is LDKKETKELS…RTIVEIRNTK (97 aa). Residues 76–158 form a disordered region; it reads ETKELSKKEK…EKKEKKEKED (83 aa). Residues 83–95 are compositionally biased toward basic residues; that stretch reads KEKKQLKKEKKAL. The span at 96–107 shows a compositional bias: basic and acidic residues; sequence KKENKGGKDKKD. Over residues 108 to 121 the composition is skewed to basic residues; sequence KKDKKDKKDKKDKK. Composition is skewed to basic and acidic residues over residues 122-131 and 139-158; these read DKKDKGDKKD and KHDD…EKED.

This is an uncharacterized protein from Dictyostelium discoideum (Social amoeba).